We begin with the raw amino-acid sequence, 244 residues long: Uridylate kinase (244 aa).

Position 18-21 (18-21) interacts with ATP; it reads KISG. The involved in allosteric activation by GTP stretch occupies residues 26-31; it reads GDQGYG. Gly-60 is a binding site for UMP. Positions 61 and 65 each coordinate ATP. Residues Asp-80 and 141–148 each bind UMP; that span reads TGNPYFTT. 3 residues coordinate ATP: Thr-168, Tyr-174, and Asp-177.

The protein belongs to the UMP kinase family. As to quaternary structure, homohexamer.

Its subcellular location is the cytoplasm. It catalyses the reaction UMP + ATP = UDP + ADP. It participates in pyrimidine metabolism; CTP biosynthesis via de novo pathway; UDP from UMP (UMPK route): step 1/1. Allosterically activated by GTP. Inhibited by UTP. In terms of biological role, catalyzes the reversible phosphorylation of UMP to UDP. In Paracoccus denitrificans (strain Pd 1222), this protein is Uridylate kinase.